Consider the following 267-residue polypeptide: 3-oxoadipate enol-lactonase 2 (267 aa).

The catalysed reaction is (4,5-dihydro-5-oxofuran-2-yl)-acetate + H2O = 3-oxoadipate + H(+). It participates in aromatic compound metabolism; beta-ketoadipate pathway; 3-oxoadipate from 5-oxo-4,5-dihydro-2-furylacetate: step 1/1. This is 3-oxoadipate enol-lactonase 2 (catD) from Acinetobacter baylyi (strain ATCC 33305 / BD413 / ADP1).